A 366-amino-acid polypeptide reads, in one-letter code: BIIDXI-like protein At5g11420 (366 aa).

A signal peptide spans 1 to 22; that stretch reads MKGGSLSFLFVLLIATITSVIC. N-linked (GlcNAc...) asparagine glycans are attached at residues asparagine 98, asparagine 122, and asparagine 209.

In terms of assembly, interacts with PME3.

It localises to the secreted. It is found in the cell wall. Together with BIIDXI, acts as a positive regulator of PME3 activity during several developmental processes, including seed germination and endosperm (testa) rupture at the micropyle, probably by modulating the pectin status in cell walls. The sequence is that of BIIDXI-like protein At5g11420 from Arabidopsis thaliana (Mouse-ear cress).